Here is a 243-residue protein sequence, read N- to C-terminus: Probable septum site-determining protein MinC (243 aa).

The protein belongs to the MinC family. Interacts with MinD and FtsZ.

Its function is as follows. Cell division inhibitor that blocks the formation of polar Z ring septums. Rapidly oscillates between the poles of the cell to destabilize FtsZ filaments that have formed before they mature into polar Z rings. Prevents FtsZ polymerization. This is Probable septum site-determining protein MinC from Agathobacter rectalis (strain ATCC 33656 / DSM 3377 / JCM 17463 / KCTC 5835 / VPI 0990) (Eubacterium rectale).